A 219-amino-acid polypeptide reads, in one-letter code: Cytidylate kinase (219 aa).

ATP is bound at residue 10 to 18 (GPAAAGKST).

It belongs to the cytidylate kinase family. Type 1 subfamily.

The protein resides in the cytoplasm. It catalyses the reaction CMP + ATP = CDP + ADP. The catalysed reaction is dCMP + ATP = dCDP + ADP. The sequence is that of Cytidylate kinase from Staphylococcus saprophyticus subsp. saprophyticus (strain ATCC 15305 / DSM 20229 / NCIMB 8711 / NCTC 7292 / S-41).